A 121-amino-acid polypeptide reads, in one-letter code: Large ribosomal subunit protein uL14 (121 aa).

Belongs to the universal ribosomal protein uL14 family. Part of the 50S ribosomal subunit. Forms a cluster with proteins L3 and L19. In the 70S ribosome, L14 and L19 interact and together make contacts with the 16S rRNA in bridges B5 and B8.

In terms of biological role, binds to 23S rRNA. Forms part of two intersubunit bridges in the 70S ribosome. This is Large ribosomal subunit protein uL14 from Parasynechococcus marenigrum (strain WH8102).